We begin with the raw amino-acid sequence, 311 residues long: UDP-N-acetylenolpyruvoylglucosamine reductase (311 aa).

Residues 28–197 (KIGGNARWLV…VSARFHLARG (170 aa)) enclose the FAD-binding PCMH-type domain. The active site involves arginine 177. Catalysis depends on serine 226, which acts as the Proton donor. The active site involves glutamate 296.

The protein belongs to the MurB family. FAD is required as a cofactor.

It localises to the cytoplasm. It carries out the reaction UDP-N-acetyl-alpha-D-muramate + NADP(+) = UDP-N-acetyl-3-O-(1-carboxyvinyl)-alpha-D-glucosamine + NADPH + H(+). It participates in cell wall biogenesis; peptidoglycan biosynthesis. Its function is as follows. Cell wall formation. The sequence is that of UDP-N-acetylenolpyruvoylglucosamine reductase from Magnetococcus marinus (strain ATCC BAA-1437 / JCM 17883 / MC-1).